The following is a 440-amino-acid chain: Tetratricopeptide repeat protein 5 (440 aa).

TPR repeat units follow at residues 7 to 61 (EEVK…EEVV), 68 to 98 (AQVL…AVKL), 103 to 130 (VEAW…SGAL), 136 to 174 (KVSL…AVQM), and 179 to 216 (GRSW…AEKV). Positions 13–24 (LQKLQELVDQLY) match the Nuclear export signal motif. Phosphoserine; by ATM is present on S203. S221 carries the phosphoserine; by CHEK2 modification. Residues 224-253 (PDLHLNRATLHKYEESYGEALEGFSRAAAL) form a TPR 6 repeat. The interval 285 to 287 (KTK) is mediates interaction with 28S rRNA of ribosome-coding tubulin.

As to quaternary structure, interacts with JMY and p300/EP300; the interaction occurs in the nucleus and augments the association between JMY and p300/EP300 in response to DNA damage. Forms a complex with HSF1 and p300/EP300; these interactions augment chromatin-bound HSF1 and p300/EP300 histone acetyltransferase activity, resulting in enhanced heat-shock-responsive transcription. Interacts with PRMT5; the interaction is DNA damage-dependent and promotes PRMT5 interaction with p53/TP53 and subsequent methylation. Interacts with JMY; the interaction occurs in the cytoplasm and results in the inhibition of JYM's nucleation activity. Interacts with ribosome-coding tubulin (via 60S subunit 28S rRNA and protein uL24/RPL26) and the N-terminal of nascent tubulin polypeptide (via alpha-tubulin MREC motif and beta-tubulin MREI motif); these interactions result in tubulin mRNA-targeted degradation. Interacts with ATP5F1B; the interaction occurs in the mitochondria and results in ATP production decrease. Interacts with p53/TP53; the interaction occurs in the mitochondria and results in increased apoptosis. Phosphorylation by ATM kinase induces nuclear accumulation while interfering with nuclear export, and phosphorylation by CHEK2 kinase enhances nuclear stability.

The protein localises to the nucleus. It is found in the cytoplasm. Its subcellular location is the cytoplasmic vesicle. The protein resides in the mitochondrion matrix. Its function is as follows. Cofactor involved in the regulation of various cellular mechanisms such as actin regulation, autophagy, chromatin regulation and DNA repair. In non-stress conditions, interacts with cofactor JMY in the cytoplasm which prevents JMY's actin nucleation activity and ability to activate the Arp2/3 complex. Acts as a negative regulator of nutrient stress-induced autophagy by preventing JMY's interaction with MAP1LC3B, thereby preventing autophagosome formation. Involves in tubulin autoregulation by promoting its degradation in response to excess soluble tubulin. To do so, associates with the active ribosome near the ribosome exit tunnel and with nascent tubulin polypeptides early during their translation, triggering tubulin mRNA-targeted degradation. Following DNA damage, phosphorylated by DNA damage responsive protein kinases ATM and CHEK2, leading to its nuclear accumulation and stability. Nuclear TTC5/STRAP promotes the assembly of a stress-responsive p53/TP53 coactivator complex, which includes the coactivators JMY and p300, thereby increasing p53/TP53-dependent transcription and apoptosis. Also recruits arginine methyltransferase PRMT5 to p53/TP53 when DNA is damaged, allowing PRMT5 to methylate p53/TP53. In DNA stress conditions, also prevents p53/TP53 degradation by E3 ubiquitin ligase MDM2. Upon heat-shock stress, forms a chromatin-associated complex with heat-shock factor 1 HSF1 and p300/EP300 to stimulate heat-shock-responsive transcription, thereby increasing cell survival. Mitochondrial TTC5/STRAP interacts with ATP synthase subunit beta ATP5F1B which decreased ATP synthase activity and lowers mitochondrial ATP production, thereby regulating cellular respiration and mitochondrial-dependent apoptosis. Mitochondrial TTC5/STRAP also regulates p53/TP53-mediated apoptosis. This is Tetratricopeptide repeat protein 5 from Homo sapiens (Human).